The sequence spans 246 residues: 1-(5-phosphoribosyl)-5-[(5-phosphoribosylamino)methylideneamino] imidazole-4-carboxamide isomerase (246 aa).

Aspartate 8 (proton acceptor) is an active-site residue. Aspartate 131 serves as the catalytic Proton donor.

The protein belongs to the HisA/HisF family.

The protein resides in the cytoplasm. The enzyme catalyses 1-(5-phospho-beta-D-ribosyl)-5-[(5-phospho-beta-D-ribosylamino)methylideneamino]imidazole-4-carboxamide = 5-[(5-phospho-1-deoxy-D-ribulos-1-ylimino)methylamino]-1-(5-phospho-beta-D-ribosyl)imidazole-4-carboxamide. The protein operates within amino-acid biosynthesis; L-histidine biosynthesis; L-histidine from 5-phospho-alpha-D-ribose 1-diphosphate: step 4/9. This Bordetella petrii (strain ATCC BAA-461 / DSM 12804 / CCUG 43448) protein is 1-(5-phosphoribosyl)-5-[(5-phosphoribosylamino)methylideneamino] imidazole-4-carboxamide isomerase.